We begin with the raw amino-acid sequence, 628 residues long: Biosynthetic arginine decarboxylase (628 aa).

Lysine 101 carries the N6-(pyridoxal phosphate)lysine modification. Residue 281-291 participates in substrate binding; that stretch reads VDVGGGLGVDY.

The protein belongs to the Orn/Lys/Arg decarboxylase class-II family. SpeA subfamily. It depends on Mg(2+) as a cofactor. Pyridoxal 5'-phosphate is required as a cofactor.

The enzyme catalyses L-arginine + H(+) = agmatine + CO2. It functions in the pathway amine and polyamine biosynthesis; agmatine biosynthesis; agmatine from L-arginine: step 1/1. Catalyzes the biosynthesis of agmatine from arginine. The chain is Biosynthetic arginine decarboxylase from Alkalilimnicola ehrlichii (strain ATCC BAA-1101 / DSM 17681 / MLHE-1).